Consider the following 500-residue polypeptide: Oogenesin-3 (500 aa).

The LRR 1; degenerate repeat unit spans residues 116–143 (RCKLRVLKWRDEQHDFCGIWPGSHEAED). Residues 198-222 (HLLCRKLVIETLTKDTVIEIFKIVN) form an LRR 2; degenerate repeat. The LRR 3; degenerate repeat unit spans residues 223–248 (ADCIQELELYSLCLEDLAFLNPYLRQ). Residues 249–285 (MDNLLELTLDHVTDSLSMGDSEMCEEEMITLVSQLPT) form an LRR 4; degenerate repeat. 5 LRR repeats span residues 286 to 311 (FPCLQKLCVNDVYFIYGNLNEILRCL), 312 to 343 (KKPLVSFCISNCELSQSDLDCLPYCLNIFELK), 344 to 367 (CLYLIDIPLNHLCLDPLGFLLESV), 368 to 395 (RHTLECLELKSCDMGEPQFNALLPALSQ), and 396 to 420 (CSHLTDVSFWENELSLLFLKQLLQH).

This sequence belongs to the PRAME family. Expressed in ovary, specifically in oocytes. Detected in follicles with two layers of granulosa cells, and are present in early as well as large antral follicles.

The polypeptide is Oogenesin-3 (Mus musculus (Mouse)).